Here is an 865-residue protein sequence, read N- to C-terminus: Anaphase-promoting complex subunit 2 (865 aa).

Belongs to the cullin family. As to quaternary structure, the APC/C is composed of at least 10 subunits. Interacts with APC8, APC11, CDC27A and CDC27B. In terms of tissue distribution, highly expressed in immature flowers. Expressed in stems, leaves and flowers.

Its subcellular location is the nucleus. It functions in the pathway protein modification; protein ubiquitination. Its function is as follows. Component of the anaphase promoting complex/cyclosome (APC/C), a cell cycle-regulated E3 ubiquitin-protein ligase complex that controls progression through mitosis and the G1 phase of the cell cycle. The APC/C complex controls several key steps in the cell cycle by mediating ubiquitination and subsequent degradation of target proteins such as cyclins. The APC/C complex is required for the female gametophyte development and is involved in several aspect of development by controlling cell division and cell elongation. Involved in the control of endoreduplication. The protein is Anaphase-promoting complex subunit 2 (APC2) of Arabidopsis thaliana (Mouse-ear cress).